We begin with the raw amino-acid sequence, 161 residues long: MTMVGLIWAQATSGVIGRGGDIPWRLPEDQAHFREITMGHTIVMGRRTWDSLPAKVRPLPGRRNVVLSRQADFMASGAEVVGSLEEALTSPETWVIGGGQVYALALPYATRCEVTEVDIGLPREAGDALAPVLDETWRGETGEWRFSRSGLRYRLYSYHRS.

In terms of domain architecture, DHFR spans 1 to 160; that stretch reads MTMVGLIWAQ…LRYRLYSYHR (160 aa). Residue 7–9 participates in substrate binding; it reads IWA. NADP(+) contacts are provided by residues 8-9 and 16-21; these read WA and IGRGGD. D29 and R34 together coordinate substrate. Position 45 to 48 (45 to 48) interacts with NADP(+); that stretch reads GRRT. R62 is a substrate binding site. NADP(+) contacts are provided by residues 67–70, G82, and 96–101; these read LSRQ and IGGGQV. Substrate is bound by residues Y102 and T115.

Belongs to the dihydrofolate reductase family.

It carries out the reaction (6S)-5,6,7,8-tetrahydrofolate + NADP(+) = 7,8-dihydrofolate + NADPH + H(+). It participates in cofactor biosynthesis; tetrahydrofolate biosynthesis; 5,6,7,8-tetrahydrofolate from 7,8-dihydrofolate: step 1/1. Its function is as follows. Key enzyme in folate metabolism. Catalyzes an essential reaction for de novo glycine and purine synthesis, and for DNA precursor synthesis. The chain is Dihydrofolate reductase (folA) from Mycobacterium tuberculosis (strain CDC 1551 / Oshkosh).